The sequence spans 485 residues: MDLFQLTAHQLHQLLTKKEISALDITEAVYNRIEQVEDKVKSYLTLTREQAEIKARQVDQKIAAGESIGPLAGIPIAIKDNMCTQGIRTTCASKILYNFVPPYSATSVEKVYTADMVMVGKTNMDEFAMGSSTENSGFHLTHNPWDLDRVPGGSSGGSAAAVAAGEAIISLGSDTGGSIRQPAALCGVVGMKPTYGSVSRYGLVAYASSLDQIGPFTRDVTDMAHVLNVICGHDPMDSTSANLKQTDYTQFLTNDIKGMKIGVPREYMADGIDPQVREKIKAAIQKLTELGAHVEETSMPHTDYAMPAYYLIATAEASSNLARYDGVRYGLRVEEARDLVDMFMRSRSQGFGDEVKRRIMLGTYSLSAGYYDAYYLKALKVRTLIKQDFDRAFEKYDALLSPTSPTTAFKIGEMVNDPIQMYLQDVCTIPVNLAGIPAISLPCGLANNLPVGLQLMGKAFDEGTLLRIAYTLEQNTEYTRLRPEI.

Catalysis depends on charge relay system residues lysine 79 and serine 154. Serine 178 serves as the catalytic Acyl-ester intermediate.

The protein belongs to the amidase family. GatA subfamily. In terms of assembly, heterotrimer of A, B and C subunits.

It carries out the reaction L-glutamyl-tRNA(Gln) + L-glutamine + ATP + H2O = L-glutaminyl-tRNA(Gln) + L-glutamate + ADP + phosphate + H(+). Functionally, allows the formation of correctly charged Gln-tRNA(Gln) through the transamidation of misacylated Glu-tRNA(Gln) in organisms which lack glutaminyl-tRNA synthetase. The reaction takes place in the presence of glutamine and ATP through an activated gamma-phospho-Glu-tRNA(Gln). The chain is Glutamyl-tRNA(Gln) amidotransferase subunit A from Desulforamulus reducens (strain ATCC BAA-1160 / DSM 100696 / MI-1) (Desulfotomaculum reducens).